A 265-amino-acid chain; its full sequence is Type II pantothenate kinase (265 aa).

Residue 6–13 (DAGGTLIK) coordinates ATP. Catalysis depends on Glu-70, which acts as the Proton acceptor. ATP is bound by residues Thr-99, 121–125 (GGMIQ), Tyr-137, and Ser-225.

Belongs to the type II pantothenate kinase family. Homodimer.

The protein resides in the cytoplasm. The enzyme catalyses (R)-pantothenate + ATP = (R)-4'-phosphopantothenate + ADP + H(+). The protein operates within cofactor biosynthesis; coenzyme A biosynthesis; CoA from (R)-pantothenate: step 1/5. Catalyzes the phosphorylation of pantothenate (Pan), the first step in CoA biosynthesis. This is Type II pantothenate kinase from Staphylococcus epidermidis (strain ATCC 35984 / DSM 28319 / BCRC 17069 / CCUG 31568 / BM 3577 / RP62A).